A 231-amino-acid polypeptide reads, in one-letter code: Ribose-5-phosphate isomerase A (231 aa).

Residues 28 to 31 (TGST), 83 to 86 (DGAD), and 96 to 99 (KGGG) each bind substrate. Glu105 functions as the Proton acceptor in the catalytic mechanism. A substrate-binding site is contributed by Lys123.

It belongs to the ribose 5-phosphate isomerase family. As to quaternary structure, homodimer.

It catalyses the reaction aldehydo-D-ribose 5-phosphate = D-ribulose 5-phosphate. It participates in carbohydrate degradation; pentose phosphate pathway; D-ribose 5-phosphate from D-ribulose 5-phosphate (non-oxidative stage): step 1/1. In terms of biological role, catalyzes the reversible conversion of ribose-5-phosphate to ribulose 5-phosphate. This Agrobacterium fabrum (strain C58 / ATCC 33970) (Agrobacterium tumefaciens (strain C58)) protein is Ribose-5-phosphate isomerase A.